A 150-amino-acid polypeptide reads, in one-letter code: D-aminoacyl-tRNA deacylase (150 aa).

A Gly-cisPro motif, important for rejection of L-amino acids motif is present at residues 138 to 139 (GP).

Belongs to the DTD family. Homodimer.

Its subcellular location is the cytoplasm. The catalysed reaction is glycyl-tRNA(Ala) + H2O = tRNA(Ala) + glycine + H(+). It carries out the reaction a D-aminoacyl-tRNA + H2O = a tRNA + a D-alpha-amino acid + H(+). In terms of biological role, an aminoacyl-tRNA editing enzyme that deacylates mischarged D-aminoacyl-tRNAs. Also deacylates mischarged glycyl-tRNA(Ala), protecting cells against glycine mischarging by AlaRS. Acts via tRNA-based rather than protein-based catalysis; rejects L-amino acids rather than detecting D-amino acids in the active site. By recycling D-aminoacyl-tRNA to D-amino acids and free tRNA molecules, this enzyme counteracts the toxicity associated with the formation of D-aminoacyl-tRNA entities in vivo and helps enforce protein L-homochirality. The protein is D-aminoacyl-tRNA deacylase of Chlorobium phaeobacteroides (strain DSM 266 / SMG 266 / 2430).